A 301-amino-acid polypeptide reads, in one-letter code: Porphobilinogen deaminase (301 aa).

S-(dipyrrolylmethanemethyl)cysteine is present on Cys-235.

This sequence belongs to the HMBS family. As to quaternary structure, monomer. Requires dipyrromethane as cofactor.

The catalysed reaction is 4 porphobilinogen + H2O = hydroxymethylbilane + 4 NH4(+). Its pathway is porphyrin-containing compound metabolism; protoporphyrin-IX biosynthesis; coproporphyrinogen-III from 5-aminolevulinate: step 2/4. Tetrapolymerization of the monopyrrole PBG into the hydroxymethylbilane pre-uroporphyrinogen in several discrete steps. This is Porphobilinogen deaminase from Thermus thermophilus (strain ATCC BAA-163 / DSM 7039 / HB27).